Here is a 562-residue protein sequence, read N- to C-terminus: MANASQCLDDVPMGGRWPAAPPDQYNEAHRLAMEELVSGGPEAMRGFLKRERLPSFLSEPEMGEILGCASVLPCGDEENSMSASVDCSSVTYFPDRSDVEPPILELGWPAFTTGSYRGVTRVDVHFQPSFGDTIYTCKEAARELIRSAREVIALVMDNFTDNDIFRDIHEACRKRRVPVYILLDQTQVSHFLTMCYNLGVSIETEPHMRVRLLTGNHYYTRSGTKIIGKVREKFLLVDGVKVATGNYSFTWTDGKLNSSNMLVLSGQVVEKFDLQFRILYAQSNPIGAKLLSSIRSRAMCLDKLPCKLPASKKPTLSSLLRMDQAKLSSTPKRHFDEFGAKFNRDVVALDKAAEDEWLQSCDIISGLKEMQTVEVQTEPWEGKNNVRGVDVGIQTSVAAANAATQTSVLSRMASTQTVMVSRSITTQTTETSQCTTQTPAPTSSVARLSNSSNSSSSSFSSTSITSTGSNCSMKSSDFSGTAFYQPEYPLGNCFKKLTKDRQYHYSTIRSKLNHMVSILSNRNRMPNSYMANDAPCYGLQRREIMHGSLLNLRDGVRFYPNM.

Residues 424 to 471 are disordered; sequence ITTQTTETSQCTTQTPAPTSSVARLSNSSNSSSSSFSSTSITSTGSNC. Over residues 425-471 the composition is skewed to low complexity; sequence TTQTTETSQCTTQTPAPTSSVARLSNSSNSSSSSFSSTSITSTGSNC.

Belongs to the FAM83 family.

Its subcellular location is the cytoplasm. It localises to the cytoskeleton. It is found in the spindle. The protein localises to the spindle pole. Functionally, may regulate cell proliferation, growth, migration and epithelial to mesenchymal transition. May also be important for proper chromosome congression and alignment during mitosis. This is Protein FAM83D-A from Xenopus laevis (African clawed frog).